The chain runs to 97 residues: Co-chaperonin GroES (97 aa).

The protein belongs to the GroES chaperonin family. In terms of assembly, heptamer of 7 subunits arranged in a ring. Interacts with the chaperonin GroEL.

Its subcellular location is the cytoplasm. Functionally, together with the chaperonin GroEL, plays an essential role in assisting protein folding. The GroEL-GroES system forms a nano-cage that allows encapsulation of the non-native substrate proteins and provides a physical environment optimized to promote and accelerate protein folding. GroES binds to the apical surface of the GroEL ring, thereby capping the opening of the GroEL channel. In Pectobacterium carotovorum subsp. carotovorum (strain PC1), this protein is Co-chaperonin GroES.